Here is a 179-residue protein sequence, read N- to C-terminus: Signal peptidase complex catalytic subunit SEC11A (179 aa).

The Cytoplasmic portion of the chain corresponds to 1–16; sequence MLSLDFLDDVRRMNKR. A helical; Signal-anchor for type II membrane protein transmembrane segment spans residues 17 to 36; it reads QLYYQVLNFGMIVSSALMIW. Residues 37-179 lie on the Lumenal side of the membrane; sequence KGLMLITGSE…LGLFVLVHRE (143 aa). Active-site charge relay system residues include S56, H96, and D122. The segment at 165–176 is C-terminal short (CTS) helix; it reads AVLFLLGLFVLV.

It belongs to the peptidase S26B family. In terms of assembly, component of the signal peptidase complex paralog A (SPC-A) composed of a catalytic subunit SEC11A and three accessory subunits SPCS1, SPCS2 and SPCS3. Within the complex, interacts with SPCS2 and SPCS3. The complex induces a local thinning of the ER membrane which is used to measure the length of the signal peptide (SP) h-region of protein substrates. This ensures the selectivity of the complex towards h-regions shorter than 18-20 amino acids.

Its subcellular location is the endoplasmic reticulum membrane. The catalysed reaction is Cleavage of hydrophobic, N-terminal signal or leader sequences from secreted and periplasmic proteins.. Catalytic component of the signal peptidase complex (SPC) which catalyzes the cleavage of N-terminal signal sequences from nascent proteins as they are translocated into the lumen of the endoplasmic reticulum. Specifically cleaves N-terminal signal peptides that contain a hydrophobic alpha-helix (h-region) shorter than 18-20 amino acids. The protein is Signal peptidase complex catalytic subunit SEC11A (Sec11a) of Rattus norvegicus (Rat).